Reading from the N-terminus, the 320-residue chain is Ferrochelatase (320 aa).

Residues His-194 and Glu-275 each coordinate Fe cation.

It belongs to the ferrochelatase family. In terms of assembly, monomer.

The protein localises to the cytoplasm. It carries out the reaction heme b + 2 H(+) = protoporphyrin IX + Fe(2+). The protein operates within porphyrin-containing compound metabolism; protoheme biosynthesis; protoheme from protoporphyrin-IX: step 1/1. In terms of biological role, catalyzes the ferrous insertion into protoporphyrin IX. The protein is Ferrochelatase of Shigella boydii serotype 18 (strain CDC 3083-94 / BS512).